The following is a 365-amino-acid chain: MSHNTFGHLFRVTTWGESHGPALGCVVDGCPPGLRFKLEDLQVWLDKRKPGQSRFVTQRREDDLVKVLSGVMLDADGETMTTTGTPISMLIENTDQRSKDYGEIARQFRPGHADYTYDLKYGIRDYRGGGRSSARETAARVAAGGIARLVVPGVTVRGALVQIGKHKIDRRAWDWDQVGQNPFFSPDAAIVPVWEEYLDGIRKNGSSIGAVVEVIAEGVPAGLGAPIYSKLDQDIASLLMSINAVKGVEIGNGFAAAETSGEDNADEMRMGNDGVPIFLSNNAGGILGGISTGQPVVARFAVKPTSSILTERQSIDADGKNVDVRTKGRHDPCVGIRAVPIGEAMVACAIADHYLRDRGQTGRLK.

NADP(+) is bound by residues R48 and R54. FMN contacts are provided by residues 131 to 133, 243 to 244, G288, 303 to 307, and R329; these read RSS, NA, and KPTSS.

Belongs to the chorismate synthase family. Homotetramer. The cofactor is FMNH2.

It catalyses the reaction 5-O-(1-carboxyvinyl)-3-phosphoshikimate = chorismate + phosphate. The protein operates within metabolic intermediate biosynthesis; chorismate biosynthesis; chorismate from D-erythrose 4-phosphate and phosphoenolpyruvate: step 7/7. Catalyzes the anti-1,4-elimination of the C-3 phosphate and the C-6 proR hydrogen from 5-enolpyruvylshikimate-3-phosphate (EPSP) to yield chorismate, which is the branch point compound that serves as the starting substrate for the three terminal pathways of aromatic amino acid biosynthesis. This reaction introduces a second double bond into the aromatic ring system. This is Chorismate synthase from Rhizobium leguminosarum bv. trifolii (strain WSM2304).